A 156-amino-acid polypeptide reads, in one-letter code: Endoribonuclease YbeY (156 aa).

Residues His115, His119, and His125 each coordinate Zn(2+).

It belongs to the endoribonuclease YbeY family. Zn(2+) is required as a cofactor.

The protein resides in the cytoplasm. In terms of biological role, single strand-specific metallo-endoribonuclease involved in late-stage 70S ribosome quality control and in maturation of the 3' terminus of the 16S rRNA. This chain is Endoribonuclease YbeY, found in Actinobacillus succinogenes (strain ATCC 55618 / DSM 22257 / CCUG 43843 / 130Z).